Reading from the N-terminus, the 400-residue chain is Poly(A) polymerase type 3 (400 aa).

Residues 97 to 99 (FGS), threonine 106, 110 to 112 (DID), aspartate 164, lysine 225, tyrosine 234, and 243 to 244 (GV) contribute to the ATP site. Aspartate 110, aspartate 112, and aspartate 164 together coordinate Mg(2+). The Nuclear localization signal motif lies at 382 to 390 (GEIINKNKK).

It belongs to the poly(A) polymerase family. Monomer. Mg(2+) serves as cofactor. It depends on Mn(2+) as a cofactor.

The protein resides in the nucleus. The enzyme catalyses RNA(n) + ATP = RNA(n)-3'-adenine ribonucleotide + diphosphate. Polymerase that creates the 3'-poly(A) tail of mRNA's. May acquire specificity through interaction with a cleavage and polyadenylation factor (CPSF). This Xenopus laevis (African clawed frog) protein is Poly(A) polymerase type 3.